We begin with the raw amino-acid sequence, 1630 residues long: Separin (1630 aa).

A disordered region spans residues 1016–1037 (SKHSTGLKLCDSPRSSSMTPRG). The 100-residue stretch at 1443–1542 (EDNISMILNP…SAAMKYYGKL (100 aa)) folds into the Peptidase C50 domain. Cysteine 1531 is a catalytic residue.

As to quaternary structure, may bind calcium. Interacts with PDS1. Interacts with MCD1.

The protein localises to the nucleus. It is found in the cytoplasm. It localises to the cytoskeleton. The protein resides in the microtubule organizing center. Its subcellular location is the spindle pole body. It carries out the reaction All bonds known to be hydrolyzed by this endopeptidase have arginine in P1 and an acidic residue in P4. P6 is often occupied by an acidic residue or by a hydroxy-amino-acid residue, the phosphorylation of which enhances cleavage.. It is inactivated via its interaction with PDS1, which probably covers its active site. PDS1 degradation at anaphase, liberates it and triggers MCD1 cleavage. Functionally, caspase-like protease, which plays a central role in the chromosome segregation by cleaving the MCD1/SCC1 subunit of the cohesin complex at the onset of anaphase. During most of the cell cycle, it is inactivated by securin/PDS1 protein. It also promotes anaphase spindle elongation. A component of the FEAR (CDC14 early anaphase release) network which promotes CDC14 release from the nucleolus during early anaphase. Cleaves SLK19. In Saccharomyces cerevisiae (strain ATCC 204508 / S288c) (Baker's yeast), this protein is Separin (ESP1).